A 231-amino-acid chain; its full sequence is Sugar fermentation stimulation protein homolog (231 aa).

The protein belongs to the SfsA family.

In Geotalea daltonii (strain DSM 22248 / JCM 15807 / FRC-32) (Geobacter daltonii), this protein is Sugar fermentation stimulation protein homolog.